A 569-amino-acid chain; its full sequence is Laccase-14 (569 aa).

A signal peptide spans 1–33 (MEFKLNIPNTIIKTLQTIVFFLFVLLAFQIAEA). Plastocyanin-like domains follow at residues 41–157 (KIKS…PKRG) and 167–320 (REIP…YKGD). Asparagine 87 carries an N-linked (GlcNAc...) asparagine glycan. Histidine 91, histidine 93, histidine 136, and histidine 138 together coordinate Cu cation. 7 N-linked (GlcNAc...) asparagine glycosylation sites follow: asparagine 190, asparagine 249, asparagine 336, asparagine 374, asparagine 395, asparagine 430, and asparagine 452. The Plastocyanin-like 3 domain occupies 420–553 (DFPRNPPTKF…NTVFIVKDGP (134 aa)). Histidine 470, histidine 473, histidine 475, histidine 532, cysteine 533, histidine 534, histidine 538, and methionine 543 together coordinate Cu cation.

The protein belongs to the multicopper oxidase family. It depends on Cu cation as a cofactor. As to expression, expressed at low levels in flowers and siliques.

Its subcellular location is the secreted. The protein localises to the extracellular space. It is found in the apoplast. The enzyme catalyses 4 hydroquinone + O2 = 4 benzosemiquinone + 2 H2O. In terms of biological role, lignin degradation and detoxification of lignin-derived products. This Arabidopsis thaliana (Mouse-ear cress) protein is Laccase-14 (LAC14).